Here is a 339-residue protein sequence, read N- to C-terminus: MVVIEAILDRAKIFIEKAQDLQDLEDLRTNVLGKKGELTTLLKGLGKLSKEQRPKMGEAINQIKVNIQVLLADKKNNLELIALEKRFLAEKIDVSLPGRHAEMGGLHPITITLNRIQSLFVKNSFEVVLGPEIEDNFYNFTALNIPEHHPARAMHDTFYFDKNTVLRTHTSPVQIRTLEKQKPPVRIIAPGRVYRRDLDITHTPMFHQVEGLIVDKHANFAQLKGLLIDFLRAYFEKEVLKVRFRPSYFPFTEPSAEADIECVICSGKGCRVCKKMGWLEVLGCGVVHPNVLSSVNIDSEVYTGLAFGIGIERLAMLRYGVNDLRLFFENDSRFLRQFR.

Glu253 lines the Mg(2+) pocket.

This sequence belongs to the class-II aminoacyl-tRNA synthetase family. Phe-tRNA synthetase alpha subunit type 1 subfamily. Tetramer of two alpha and two beta subunits. The cofactor is Mg(2+).

Its subcellular location is the cytoplasm. The enzyme catalyses tRNA(Phe) + L-phenylalanine + ATP = L-phenylalanyl-tRNA(Phe) + AMP + diphosphate + H(+). This chain is Phenylalanine--tRNA ligase alpha subunit, found in Ruthia magnifica subsp. Calyptogena magnifica.